Here is a 326-residue protein sequence, read N- to C-terminus: MERKVSRIYLASEPNVPYFLQVSWERAIGSGFVITLTDGHSAWTATVSELEISQEADDMAMEKGKYIDELRKALVPGSGAAGTYKFLFSKESQHFSLEKELKDVSFRLGSFNLDKVSNSAEVIRELICYCLDTITEKQAKNEHLQKENERLLRDWNDVQGRFEKCVSAKEALEADLYQRFILVLNEKKTKIRSLHKLLNEVQQLEESTKPERENPCSDKTPEEHGLYDGSTDEESGAPVQAAETLHKDDSIFSSPDVTDIAPSRKRRHRMQKNLGTEPKMAPQELPLQEKERLASSLPQTLKEESTSAENMSLETLRNSSPEDLFD.

An interaction with IFFO1 region spans residues 1-212; it reads MERKVSRIYL…QLEESTKPER (212 aa). S53 carries the post-translational modification Phosphoserine; by PRKDC. Coiled coils occupy residues 131–165 and 185–209; these read LDTI…FEKC and NEKK…ESTK. The interval 180–211 is interaction with LIG4; sequence FILVLNEKKTKIRSLHKLLNEVQQLEESTKPE. S193 bears the Phosphoserine; by PRKDC mark. Residues 203 to 326 are disordered; sequence QLEESTKPER…RNSSPEDLFD (124 aa). A compositionally biased stretch (basic and acidic residues) spans 206 to 226; that stretch reads ESTKPERENPCSDKTPEEHGL. Y227 bears the Phosphotyrosine mark. S230 is subject to Phosphoserine. Position 231 is a phosphothreonine (T231). Residue S235 is modified to Phosphoserine. Residue T244 is modified to Phosphothreonine. The residue at position 250 (S250) is a Phosphoserine. S254 is modified (phosphoserine; by PRKDC). A Nuclear localization signal motif is present at residues 264–269; the sequence is RKRRHR. Residue K290 forms a Glycyl lysine isopeptide (Lys-Gly) (interchain with G-Cter in ubiquitin) linkage. S295 carries the phosphoserine; by PRKDC modification. A Phosphoserine modification is found at S296. Residues S307 and S312 each carry the phosphoserine; by PRKDC modification. A compositionally biased stretch (polar residues) spans 307–326; sequence SAENMSLETLRNSSPEDLFD. The residue at position 315 (T315) is a Phosphothreonine; by PRKDC. Phosphoserine; by PRKDC occurs at positions 319 and 320.

Belongs to the XRCC4-XLF family. XRCC4 subfamily. Homodimer and homotetramer in solution. Interacts with NHEJ1/XLF; the interaction is direct and is mediated via a head-to-head interaction between N-terminal head regions. Interacts with LIG4; the LIG4-XRCC4 subcomplex has a 1:2 stoichiometry and XRCC4 is required for LIG4 stability. Component of the core long-range non-homologous end joining (NHEJ) complex (also named DNA-PK complex) composed of PRKDC, LIG4, XRCC4, XRCC6/Ku70, XRCC5/Ku86 and NHEJ1/XLF. Additional component of the NHEJ complex includes PAXX. Following autophosphorylation, PRKDC dissociates from DNA, leading to formation of the short-range NHEJ complex, composed of LIG4, XRCC4, XRCC6/Ku70, XRCC5/Ku86 and NHEJ1/XLF. Interacts with PRKDC; the interaction is direct. Interacts with XRCC6/Ku70; the interaction is direct. Interacts with APTX and APLF. Forms a heterotetramer with IFFO1; the interaction involves LIG4-free XRCC4 and leads to the relocalization of IFFO1 to the sites of DNA damage. Interacts with PNKP; mainly interacts with PNKP when phosphorylated at Thr-231, but is also able to interact at much lower level with PNKP when not unphosphorylated. Interacts with POLL (DNA polymerase lambda). In terms of assembly, interacts with XKR4; interacts with the processed form of XKR4, which is cleaved by caspase. Phosphorylated by PRKDC at the C-terminus in response to DNA damage; Ser-254 and Ser-312 constitute the main phosphorylation sites. Phosphorylation by PRKDC at the C-terminus of XRCC4 and NHEJ1/XLF are highly redundant and regulate ability of the XRCC4-NHEJ1/XLF subcomplex to bridge DNA. Phosphorylation by PRKDC does not prevent interaction with NHEJ1/XLF but disrupts ability to bridge DNA and promotes detachment from DNA. Phosphorylation at Ser-319 and Ser-320 by PRKDC promotes recognition by the SCF(FBXW7) complex and subsequent ubiquitination via 'Lys-63'-linked ubiquitin. Phosphorylation at Thr-231 by CK2 promotes interaction with PNKP; regulating PNKP activity and localization to DNA damage sites. Phosphorylation by CK2 promotes interaction with APTX. Post-translationally, ubiquitinated at Lys-290 by the SCF(FBXW7) complex via 'Lys-63'-linked ubiquitination, thereby promoting double-strand break repair: the SCF(FBXW7) complex specifically recognizes XRCC4 when phosphorylated at Ser-319 and Ser-320 by PRKDC, and 'Lys-63'-linked ubiquitination facilitates DNA non-homologous end joining (NHEJ) by enhancing association with XRCC5/Ku80 and XRCC6/Ku70. Monoubiquitinated. In terms of processing, undergoes proteolytic processing by caspase-3 (CASP3). This generates the protein XRCC4, C-terminus (XRCC4/C), which translocates to the cytoplasm and activates phospholipid scramblase activity of XKR4, thereby promoting phosphatidylserine exposure on apoptotic cell surface.

The protein resides in the nucleus. It is found in the chromosome. Its subcellular location is the cytoplasm. Functionally, DNA non-homologous end joining (NHEJ) core factor, required for double-strand break repair and V(D)J recombination. Acts as a scaffold protein that regulates recruitment of other proteins to DNA double-strand breaks (DSBs). Associates with NHEJ1/XLF to form alternating helical filaments that bridge DNA and act like a bandage, holding together the broken DNA until it is repaired. The XRCC4-NHEJ1/XLF subcomplex binds to the DNA fragments of a DSB in a highly diffusive manner and robustly bridges two independent DNA molecules, holding the broken DNA fragments in close proximity to one other. The mobility of the bridges ensures that the ends remain accessible for further processing by other repair factors. Plays a key role in the NHEJ ligation step of the broken DNA during DSB repair via direct interaction with DNA ligase IV (LIG4): the LIG4-XRCC4 subcomplex reseals the DNA breaks after the gap filling is completed. XRCC4 stabilizes LIG4, regulates its subcellular localization and enhances LIG4's joining activity. Binding of the LIG4-XRCC4 subcomplex to DNA ends is dependent on the assembly of the DNA-dependent protein kinase complex DNA-PK to these DNA ends. Promotes displacement of PNKP from processed strand break termini. Acts as an activator of the phospholipid scramblase activity of XKR4. This form, which is generated upon caspase-3 (CASP3) cleavage, translocates into the cytoplasm and interacts with XKR4, thereby promoting phosphatidylserine scramblase activity of XKR4 and leading to phosphatidylserine exposure on apoptotic cell surface. The chain is DNA repair protein XRCC4 from Mus musculus (Mouse).